The chain runs to 241 residues: MQDPNEDTEWNDILRDFGILPPKEESKDEIEEMVLRLQKEAMVKPFEKMTLAQLKEAEDEFDEEDMQAVETYRKKRLQEWKALKKKQKFGELREISGNQYVNEVTNAEEDVWVIIHLYRSSIPMCLLVNQHLSLLARKFPETKFVKAIVNSCIQHYHDNCLPTIFVYKNGQIEAKFIGIIECGGINLKLEELEWKLAEVGAIQTDLEENPRKDMVDMMVSSIRNTSIHDDSDSSNSDNDTK.

A Phosducin domain is found at 34-202 (VLRLQKEAMV…EWKLAEVGAI (169 aa)). Positions 89 to 241 (FGELREISGN…DSSNSDNDTK (153 aa)) are thioredoxin fold.

The protein belongs to the phosducin family. Interacts with the CCT chaperonin complex and actin. In terms of tissue distribution, testis-specific.

It is found in the endoplasmic reticulum. Essential for male fertility, spermiogenesis and acrosome formation. The sequence is that of Phosducin-like protein 2 (PDCL2) from Homo sapiens (Human).